The following is an 80-amino-acid chain: Exodeoxyribonuclease 7 small subunit (80 aa).

Belongs to the XseB family. Heterooligomer composed of large and small subunits.

The protein resides in the cytoplasm. The catalysed reaction is Exonucleolytic cleavage in either 5'- to 3'- or 3'- to 5'-direction to yield nucleoside 5'-phosphates.. In terms of biological role, bidirectionally degrades single-stranded DNA into large acid-insoluble oligonucleotides, which are then degraded further into small acid-soluble oligonucleotides. This Rickettsia africae (strain ESF-5) protein is Exodeoxyribonuclease 7 small subunit.